A 233-amino-acid polypeptide reads, in one-letter code: Somatolactin (233 aa).

The N-terminal stretch at 1–24 (MNMMQVMQSVVWAVLLWPCLVSLG) is a signal peptide. 3 cysteine pairs are disulfide-bonded: cysteine 29–cysteine 39, cysteine 89–cysteine 205, and cysteine 222–cysteine 230.

This sequence belongs to the somatotropin/prolactin family. In terms of tissue distribution, pituitary gland.

The protein resides in the secreted. May be associated with ion regulation and reproduction. The sequence is that of Somatolactin from Oncorhynchus keta (Chum salmon).